A 160-amino-acid chain; its full sequence is MGVFNYETEATSVIPAARLFKAFILDGDNLFPKVAPQAISSVENIEGNGGPGTIKKISFPEGIPFKYVKGRVDEVDHTNFKYSYSVIEGGPVGDTLEKISNEIKIVATPNGGSILKINNKYHTKGDHEVKAEQIKASKEMGETLLRAVESYLLAHSDAYN.

Brassinolide contacts are provided by Lys55, Tyr82, Tyr84, and Asn101.

Belongs to the BetVI family.

The protein resides in the cytoplasm. Functionally, may be a general steroid carrier protein. In Betula pendula (European white birch), this protein is Major pollen allergen Bet v 1-E (BETV1E).